The chain runs to 58 residues: Large ribosomal subunit protein uL30 (58 aa).

This sequence belongs to the universal ribosomal protein uL30 family. In terms of assembly, part of the 50S ribosomal subunit.

This is Large ribosomal subunit protein uL30 from Pelobacter propionicus (strain DSM 2379 / NBRC 103807 / OttBd1).